The sequence spans 504 residues: Beta-glucosidase 24 (504 aa).

An N-terminal signal peptide occupies residues 1–18 (MELLWLLLLLLMASSTSS). An a beta-D-glucoside-binding site is contributed by Gln-47. N-linked (GlcNAc...) asparagine glycosylation is present at Asn-75. A beta-D-glucoside-binding positions include His-151 and 196–197 (NE). Catalysis depends on Glu-197, which acts as the Proton donor. A disulfide bond links Cys-216 and Cys-224. Asn-329 is a glycosylation site (N-linked (GlcNAc...) asparagine). Tyr-340 lines the a beta-D-glucoside pocket. Residue Asn-371 is glycosylated (N-linked (GlcNAc...) asparagine). Residue Glu-411 participates in a beta-D-glucoside binding. The Nucleophile role is filled by Glu-411. The N-linked (GlcNAc...) asparagine glycan is linked to Asn-421. Residues Trp-460, 467–468 (EW), and Phe-476 each bind a beta-D-glucoside.

Belongs to the glycosyl hydrolase 1 family.

It catalyses the reaction Hydrolysis of terminal, non-reducing beta-D-glucosyl residues with release of beta-D-glucose.. The protein is Beta-glucosidase 24 (BGLU24) of Oryza sativa subsp. japonica (Rice).